Here is a 69-residue protein sequence, read N- to C-terminus: MKEDIQPKYGDMTATCSCGNVIKTRSTLAKDIHVDVCSECHPFYTGKQKVVDSGGRIDRFNKRFTRRSK.

The Zn(2+) site is built by Cys16, Cys18, Cys37, and Cys40.

The protein belongs to the bacterial ribosomal protein bL31 family. Type A subfamily. As to quaternary structure, part of the 50S ribosomal subunit. The cofactor is Zn(2+).

Functionally, binds the 23S rRNA. This Teredinibacter turnerae (strain ATCC 39867 / T7901) protein is Large ribosomal subunit protein bL31.